Reading from the N-terminus, the 31-residue chain is PLFDKRQRCCNGRRGCSSRWCRDHSRCCGRR.

Positions 1–6 (PLFDKR) are excised as a propeptide. Q7 carries the post-translational modification Pyrrolidone carboxylic acid. Disulfide bonds link C9/C21, C10/C27, and C16/C28. C28 bears the Cysteine amide mark.

The protein belongs to the conotoxin M superfamily. Post-translationally, smIIIA' is a putative isoform where the N-terminal AA is missing. In terms of tissue distribution, expressed by the venom duct.

Its subcellular location is the secreted. In terms of biological role, mu-conotoxins block voltage-gated sodium channels (Nav). This toxin blocks rNav1.5/SCN5A (IC(50) is 1.3 uM), rNav1.6/SCN8A (IC(50) is 160 nM), rNav1.7/SCN9A (IC(50) is 1.3 uM), rNav1.1/SCN1A (K(d) is 3.8 nM), rNav1.2/SCN2A (K(d) is 1.3 nM), rNav1.4/SCN4A (K(d) is 0.22 nM), rNav1.6/SCN8A (K(d) is 69 nM), and rNav1.7/SCN9A (K(d) is 260 nM). This toxin is very potent but weakly discriminating among sodium channels. The block of these channels is modified when beta-subunits are coexpressed with alpha subunits. Hence, blocks of channels containing beta-1 and beta-3 subunits are more potent (compared to channels without beta subunits), whereas blocks of channels containing beta-2 and beta-4 subunits are less potent (compared to channels without beta subunits). This Conus stercusmuscarum (Fly-specked cone) protein is Mu-conotoxin SmIIIA.